The primary structure comprises 301 residues: Phosphatidylserine decarboxylase proenzyme (301 aa).

Residues aspartate 117, histidine 173, and serine 260 each act as charge relay system; for autoendoproteolytic cleavage activity in the active site. Serine 260 functions as the Schiff-base intermediate with substrate; via pyruvic acid; for decarboxylase activity in the catalytic mechanism. A Pyruvic acid (Ser); by autocatalysis modification is found at serine 260.

The protein belongs to the phosphatidylserine decarboxylase family. PSD-B subfamily. Prokaryotic type II sub-subfamily. In terms of assembly, heterodimer of a large membrane-associated beta subunit and a small pyruvoyl-containing alpha subunit. Pyruvate serves as cofactor. Is synthesized initially as an inactive proenzyme. Formation of the active enzyme involves a self-maturation process in which the active site pyruvoyl group is generated from an internal serine residue via an autocatalytic post-translational modification. Two non-identical subunits are generated from the proenzyme in this reaction, and the pyruvate is formed at the N-terminus of the alpha chain, which is derived from the carboxyl end of the proenzyme. The autoendoproteolytic cleavage occurs by a canonical serine protease mechanism, in which the side chain hydroxyl group of the serine supplies its oxygen atom to form the C-terminus of the beta chain, while the remainder of the serine residue undergoes an oxidative deamination to produce ammonia and the pyruvoyl prosthetic group on the alpha chain. During this reaction, the Ser that is part of the protease active site of the proenzyme becomes the pyruvoyl prosthetic group, which constitutes an essential element of the active site of the mature decarboxylase.

The protein localises to the cell membrane. It carries out the reaction a 1,2-diacyl-sn-glycero-3-phospho-L-serine + H(+) = a 1,2-diacyl-sn-glycero-3-phosphoethanolamine + CO2. It participates in phospholipid metabolism; phosphatidylethanolamine biosynthesis; phosphatidylethanolamine from CDP-diacylglycerol: step 2/2. Its function is as follows. Catalyzes the formation of phosphatidylethanolamine (PtdEtn) from phosphatidylserine (PtdSer). This chain is Phosphatidylserine decarboxylase proenzyme, found in Chlamydia trachomatis serovar L2b (strain UCH-1/proctitis).